A 593-amino-acid polypeptide reads, in one-letter code: Monoterpene synthase 7, chloroplastic (593 aa).

The N-terminal 39 residues, 1-39 (MSVSLSFAASATFGFRGGLGGFSRPAAAIKQWRCLPRIQ), are a transit peptide targeting the chloroplast. Mg(2+)-binding residues include aspartate 348, aspartate 352, aspartate 491, and glutamate 499. The DDXXD motif motif lies at 348–352 (DDVYD).

This sequence belongs to the terpene synthase family. Tpsa subfamily. Requires Mg(2+) as cofactor. It depends on Mn(2+) as a cofactor. In terms of tissue distribution, highly expressed in flowers, petals and sepals, but almost undetectable in vegetative organs.

It localises to the plastid. It is found in the chloroplast. The enzyme catalyses (2E)-geranyl diphosphate = sabinene + diphosphate. The catalysed reaction is (2E)-geranyl diphosphate = terpinolene + diphosphate. It carries out the reaction (2E)-geranyl diphosphate = alpha-pinene + diphosphate. It catalyses the reaction (2E)-geranyl diphosphate = beta-pinene + diphosphate. The enzyme catalyses (2E)-geranyl diphosphate = beta-myrcene + diphosphate. The catalysed reaction is (2E)-geranyl diphosphate = alpha-terpinene + diphosphate. It carries out the reaction (2E)-geranyl diphosphate = beta-phellandrene + diphosphate. It catalyses the reaction (2E)-geranyl diphosphate = gamma-terpinene + diphosphate. Its pathway is secondary metabolite biosynthesis; terpenoid biosynthesis. Monoterpene synthase involved in the biosynthesis of volatile compounds present in floral scent. Mediates the conversion of (2E)-geranyl diphosphate (GPP) into sabinene and sub-products such as alpha-thujene, alpha-pinene, beta-pinene, myrcene, alpha-phellandrene, alpha-terpinene, beta-phellandrene, gamma-terpinene and terpinolene. Unable to use farnesyl diphosphate (FPP) as substrate. This chain is Monoterpene synthase 7, chloroplastic, found in Hedychium coronarium (White butterfly ginger-lily).